The following is a 1362-amino-acid chain: Bromodomain-containing protein 4B (1362 aa).

Disordered stretches follow at residues 22–57 (EGAQ…QPKR), 200–243 (SLGD…HPPA), 274–367 (LANH…DSKT), 476–639 (DEPE…SYEE), 699–941 (CLRK…TQSP), and 953–1349 (SQAP…MNFQ). The segment covering 34–49 (QPQPQTPMMQTPPPEI) has biased composition (pro residues). The Bromo 1 domain occupies 57-163 (RQTNQLQYLL…KLFLQKISEM (107 aa)). Pro residues predominate over residues 219-234 (TPTPPAVIRAPTPPQT). A compositionally biased stretch (basic and acidic residues) spans 326-342 (PRKESGRQIRPIKKTEV). The segment covering 348–358 (PAPPDLHPQPA) has biased composition (pro residues). A Bromo 2 domain is found at 365 to 474 (SKTSEQLRYC…DVFEMRFAKM (110 aa)). The segment covering 481-503 (APAPVPSPAPGPPAPSIKIPPPT) has biased composition (pro residues). The tract at residues 503–521 (TSSDTSSDSSSDSESSSDS) is NPS region. Low complexity predominate over residues 504 to 516 (SSDTSSDSSSDSE). The BID region stretch occupies residues 542–597 (QLAALSQPQPNKPKKKEREKRKEKHKRKEEVEETRKGRIREPPAKKPKKSVQVSGG). Positions 553 to 568 (KPKKKEREKRKEKHKR) are enriched in basic residues. A compositionally biased stretch (basic and acidic residues) spans 569-585 (KEEVEETRKGRIREPPA). The segment covering 606-621 (PPPVTRPARPAPPPAP) has biased composition (pro residues). The NET domain maps to 623–707 (ESSEEDTQRC…SCLRKKRKPQ (85 aa)). The segment covering 628–639 (DTQRCRPMSYEE) has biased composition (basic and acidic residues). Residues 722 to 737 (SYSSSESESSSESSTS) are compositionally biased toward low complexity. The segment covering 750 to 766 (QKKKGHSGRESRKHHHP) has biased composition (basic residues). Pro residues-rich tracts occupy residues 772-793 (IAPP…PPPS) and 871-889 (PARP…PHHQ). The segment covering 893–905 (HVHHHHHHHHHAQ) has biased composition (basic residues). Over residues 926-941 (YLQQLHKSQQPPTQSP) the composition is skewed to polar residues. Composition is skewed to low complexity over residues 953 to 963 (SQAPMAAPAQS), 977 to 1006 (SSAS…QPAG), 1014 to 1028 (QQQQ…PALQ), and 1041 to 1050 (HQQAKQQQVI). The interval 1061-1361 (RQQKQETYPG…LMEIFEQNLF (301 aa)) is C-terminal (CTD) region. Pro residues predominate over residues 1086-1099 (QVPPYPGLTHPPSP). Residues 1186–1207 (PEKEKQKQEPKTPVAPKKDLKI) are compositionally biased toward basic and acidic residues. The span at 1224–1234 (PTSAGKSTSDS) shows a compositional bias: polar residues. Positions 1236–1293 (ELFRRQAREKEERERALKHQAEQAERMRREQERMRTREDDDVQDQTRKAHEEARRRQE) are enriched in basic and acidic residues. The span at 1308-1319 (PAAPSPAQSSQP) shows a compositional bias: low complexity. The segment covering 1322–1334 (DQREMARKREQER) has biased composition (basic and acidic residues).

This sequence belongs to the BET family.

It localises to the nucleus. The protein resides in the chromosome. Functionally, chromatin reader protein that recognizes and binds acetylated histones and plays a key role in transmission of epigenetic memory across cell divisions and transcription regulation. Remains associated with acetylated chromatin throughout the entire cell cycle and provides epigenetic memory for postmitotic G1 gene transcription by preserving acetylated chromatin status and maintaining high-order chromatin structure. During interphase, plays a key role in regulating the transcription of signal-inducible genes by associating with the P-TEFb complex and recruiting it to promoters. The sequence is that of Bromodomain-containing protein 4B (brd4-b) from Xenopus laevis (African clawed frog).